A 210-amino-acid chain; its full sequence is Thiamine-phosphate synthase 2 (210 aa).

4-amino-2-methyl-5-(diphosphooxymethyl)pyrimidine contacts are provided by residues 38 to 42 and D70; that span reads QLREK. Mg(2+) is bound by residues D71 and E90. T109 provides a ligand contact to 4-amino-2-methyl-5-(diphosphooxymethyl)pyrimidine. 135–137 serves as a coordination point for 2-[(2R,5Z)-2-carboxy-4-methylthiazol-5(2H)-ylidene]ethyl phosphate; it reads TTT. K138 is a binding site for 4-amino-2-methyl-5-(diphosphooxymethyl)pyrimidine. A 2-[(2R,5Z)-2-carboxy-4-methylthiazol-5(2H)-ylidene]ethyl phosphate-binding site is contributed by G165.

The protein belongs to the thiamine-phosphate synthase family. Mg(2+) serves as cofactor.

The catalysed reaction is 2-[(2R,5Z)-2-carboxy-4-methylthiazol-5(2H)-ylidene]ethyl phosphate + 4-amino-2-methyl-5-(diphosphooxymethyl)pyrimidine + 2 H(+) = thiamine phosphate + CO2 + diphosphate. The enzyme catalyses 2-(2-carboxy-4-methylthiazol-5-yl)ethyl phosphate + 4-amino-2-methyl-5-(diphosphooxymethyl)pyrimidine + 2 H(+) = thiamine phosphate + CO2 + diphosphate. It carries out the reaction 4-methyl-5-(2-phosphooxyethyl)-thiazole + 4-amino-2-methyl-5-(diphosphooxymethyl)pyrimidine + H(+) = thiamine phosphate + diphosphate. The protein operates within cofactor biosynthesis; thiamine diphosphate biosynthesis; thiamine phosphate from 4-amino-2-methyl-5-diphosphomethylpyrimidine and 4-methyl-5-(2-phosphoethyl)-thiazole: step 1/1. Its function is as follows. Condenses 4-methyl-5-(beta-hydroxyethyl)thiazole monophosphate (THZ-P) and 2-methyl-4-amino-5-hydroxymethyl pyrimidine pyrophosphate (HMP-PP) to form thiamine monophosphate (TMP). The chain is Thiamine-phosphate synthase 2 from Streptococcus pneumoniae serotype 4 (strain ATCC BAA-334 / TIGR4).